Here is a 190-residue protein sequence, read N- to C-terminus: Ladderlectin (190 aa).

Residues 1–18 (MAMLTISLLLCAAVALNG) form the signal peptide. A C-type lectin domain is found at 60-179 (GSRCFMFVET…GNSFPSGVLQ (120 aa)). A disulfide bridge connects residues cysteine 153 and cysteine 169.

Multimeric. In terms of tissue distribution, expressed in cells of the branchial epithelium, hepatic sinusoids, biliary epithelium, renal interstitium, skin, and sub-mucosal granular layer of the intestine. Highly expressed in caudal kidney. Moderately expressed in liver. Weakly expressed in gill, spleen, cranial kidney and skin. Isoform 1 is highly expressed in intestine. Isoform 2 is weakly expressed in intestine.

Lectin that binds sepharose in a calcium-dependent manner. This chain is Ladderlectin, found in Oncorhynchus mykiss (Rainbow trout).